We begin with the raw amino-acid sequence, 169 residues long: Peptide deformylase (169 aa).

Cysteine 91 and histidine 133 together coordinate Fe cation. Glutamate 134 is an active-site residue. Position 137 (histidine 137) interacts with Fe cation.

This sequence belongs to the polypeptide deformylase family. The cofactor is Fe(2+).

It carries out the reaction N-terminal N-formyl-L-methionyl-[peptide] + H2O = N-terminal L-methionyl-[peptide] + formate. Removes the formyl group from the N-terminal Met of newly synthesized proteins. Requires at least a dipeptide for an efficient rate of reaction. N-terminal L-methionine is a prerequisite for activity but the enzyme has broad specificity at other positions. The polypeptide is Peptide deformylase (Salmonella typhi).